Reading from the N-terminus, the 243-residue chain is Probable transcriptional regulatory protein BP2308 (243 aa).

Residues 1 to 21 (MAGHSKWANIQHRKGRQDAKR) form a disordered region.

This sequence belongs to the TACO1 family.

The protein localises to the cytoplasm. The sequence is that of Probable transcriptional regulatory protein BP2308 from Bordetella pertussis (strain Tohama I / ATCC BAA-589 / NCTC 13251).